A 15639-amino-acid chain; its full sequence is FR901469 synthetase (15639 aa).

Residues 5–81 form the Carrier 1 domain; it reads HTSDGLRKLL…DLVDKIIEQQ (77 aa). S42 carries the O-(pantetheine 4'-phosphoryl)serine modification. The span at 82–94 shows a compositional bias: acidic residues; the sequence is LEEEEEDDDSLDN. Residues 82–105 form a disordered region; the sequence is LEEEEEDDDSLDNESERDHSQKDL. Residues 140–553 form a condensation 1 region; it reads PCLSMQEGCL…RDFLPLTEDD (414 aa). Residues 579–971 are adenylation 1; sequence TISKQPDAVA…LGRRDTQVKI (393 aa). The 77-residue stretch at 1108 to 1184 folds into the Carrier 2 domain; sequence TPATAIEKEL…ELALVARSTT (77 aa). S1145 bears the O-(pantetheine 4'-phosphoryl)serine mark. The tract at residues 1219–1626 is epimerase 1; sequence RSSNRFNQSV…TITHLVKRLA (408 aa). Positions 1667–2097 are condensation 2; that stretch reads EDVLPCTPIQ…LGNLSLLTNN (431 aa). Residues 2122 to 2518 are adenylation 2; it reads QEAAKEYTNA…GRRDNQIKIR (397 aa). The 77-residue stretch at 2654–2730 folds into the Carrier 3 domain; sequence VPATALEKQL…ELALKAKSTT (77 aa). O-(pantetheine 4'-phosphoryl)serine is present on S2691. The segment at 2761–3176 is epimerase 2; that stretch reads VSAGEHRYNQ…TELLHRLEQM (416 aa). The condensation 3 stretch occupies residues 3215-3640; the sequence is QDIYPCSPTQ…DDLIMMSPED (426 aa). Residues 3669–4059 form an adenylation 3 region; the sequence is TQPHAPAVAA…MGRIDSQIKI (391 aa). Residues 4193 to 4269 form the Carrier 4 domain; sequence PPSNDAERMV…QLAAIVTQRG (77 aa). Residue S4230 is modified to O-(pantetheine 4'-phosphoryl)serine. The condensation 4 stretch occupies residues 4316 to 4714; that stretch reads EDVYPCTPLQ…ILAHGTGLEE (399 aa). Positions 4756–5149 are adenylation 4; the sequence is TEAASTRPDA…GRLDTQAKLR (394 aa). The region spanning 5284–5360 is the Carrier 5 domain; that stretch reads EPATIMERQL…DLASHIDHHT (77 aa). O-(pantetheine 4'-phosphoryl)serine is present on S5321. Positions 5402–5802 are condensation 5; that stretch reads EDIYPCTPLQ…TVFAQLCDSS (401 aa). Positions 5847-6238 are adenylation 5; it reads KYPNEPAVHA…LGRRDSQMKV (392 aa). One can recognise a Carrier 6 domain in the interval 6375 to 6451; the sequence is QPSTTAEIKL…DMAKIVEEHV (77 aa). O-(pantetheine 4'-phosphoryl)serine is present on S6412. Residues 6494-6889 are condensation 6; the sequence is EDVYPATPLQ…RFAKVYQQLS (396 aa). The tract at residues 6952–7335 is adenylation 6; the sequence is WDGSMTYAEL…GRRDTQIKIR (384 aa). In terms of domain architecture, Carrier 7 spans 7473-7546; sequence TAMEEQLRTV…QLALLASTDE (74 aa). S7507 is subject to O-(pantetheine 4'-phosphoryl)serine. An epimerase 3 region spans residues 7580-7992; it reads MGENRYNQSV…SKTLEELTTQ (413 aa). Residues 8034–8459 are condensation 7; that stretch reads EDVFPASPMQ…QRMRNISLAS (426 aa). Positions 8486–8882 are adenylation 7; it reads QKSVHARPDA…GRRDTQVKIR (397 aa). In terms of domain architecture, Carrier 8 spans 9015–9091; that stretch reads QPATDAERQL…DLAKTIQDSE (77 aa). Residue S9052 is modified to O-(pantetheine 4'-phosphoryl)serine. The segment at 9136 to 9535 is condensation 8; it reads EDVYPCTPLQ…FAAIFRQLCD (400 aa). Residues 9583–9974 form an adenylation 8 region; that stretch reads KNPHAIAVNA…GRRDNQMKIR (392 aa). The Carrier 9 domain occupies 10110 to 10186; it reads EPATPMEMQL…GLAALIQKQI (77 aa). At S10147 the chain carries O-(pantetheine 4'-phosphoryl)serine. The tract at residues 10186 to 10208 is disordered; that stretch reads IDEEEEYDDSEEEEEDDEEEVRE. Residues 10187–10206 are compositionally biased toward acidic residues; sequence DEEEEYDDSEEEEEDDEEEV. The condensation 9 stretch occupies residues 10240–10662; sequence VEDVYPCTPL…VLSETDKTKI (423 aa). Residues 10683-11082 form an adenylation 9 region; that stretch reads KQAIERPNAP…GRRDTQIKIR (400 aa). Residues 11217–11293 form the Carrier 10 domain; sequence EPATGMERHL…DLARETESQG (77 aa). An O-(pantetheine 4'-phosphoryl)serine modification is found at S11254. The condensation 10 stretch occupies residues 11329-11725; sequence EDVYPCTPLQ…ETIFQQLSSV (397 aa). Positions 11770-12165 are adenylation 10; that stretch reads FKRTADKQPE…GRRDTQIKVR (396 aa). The region spanning 12298–12374 is the Carrier 11 domain; the sequence is EPSTEMERRI…DLAAAVQGRI (77 aa). At S12335 the chain carries O-(pantetheine 4'-phosphoryl)serine. Positions 12418-12830 are condensation 11; that stretch reads EDVYPATPLQ…IQDIEMVSEQ (413 aa). The segment at 12861–13249 is adenylation 11; sequence SRADEIAICA…GRRDTQIKIR (389 aa). One can recognise a Carrier 12 domain in the interval 13383–13459; it reads MPGTVQEEQL…QLGQKVKEAV (77 aa). S13420 carries the post-translational modification O-(pantetheine 4'-phosphoryl)serine. The epimerase 4 stretch occupies residues 13476–13901; the sequence is APIQQMFFEQ…LKDMTSTLLQ (426 aa). Residues 13940–14369 are condensation 12; it reads EDILPCSPIQ…SIVGEHDLQQ (430 aa). The segment at 14390 to 14789 is adenylation 12; sequence RDAAHRTPDA…GRGDGQIKIR (400 aa). In terms of domain architecture, Carrier 13 spans 14916 to 14992; sequence LPASADEGAL…DMASVASAAR (77 aa). Position 14953 is an O-(pantetheine 4'-phosphoryl)serine (S14953). The condensation 13 stretch occupies residues 15062–15433; sequence QHAVDLAALK…DIMVRLASQQ (372 aa). 2 disordered regions span residues 15434-15511 and 15617-15639; these read EGTV…ENRQ and VQTN…KGHI. Residues 15455 to 15472 show a composition bias toward low complexity; it reads NGTNGSNGDGTDAANGIG. Over residues 15482-15494 the composition is skewed to basic and acidic residues; the sequence is AVEKSSGDAEVEK. The span at 15495 to 15511 shows a compositional bias: polar residues; sequence VSTNGHADNNTSAENRQ.

It belongs to the NRP synthetase family.

Its pathway is antifungal biosynthesis. Functionally, nonribosomal peptide synthetase; part of the gene cluster that mediates the biosynthesis of the antifungal antibiotic FR901469, an inhibitor of beta-1,3-glucansynthase, exerting antifungal activity against the pathogenes Candida albicans and Aspergillus fumigatus. FR901469 is a cyclic depsipeptide containing 12 amino acid residues and a fatty acid chain. The NRPS frbI contains 12 modules responsible for the formation of the depsipeptide backbone which is denoted as Acyl-Thr-Ala-Tyr-Val-4OHPro-Thr-Thr-3OHPro-threo3OHGln-Gly-Thr-Orn-OH (C71H116N14O23). The PKS frbB is probably involved in the production of the hydrocarbon chain, and the acyl-CoA ligase frbC might be involved in the transport of the chain to the peptide ptoduct of frbI. Because FR901469 contains 3 hydroxylated amino acid residues, the 3 oxygenases frbA, frbH, and frbJ might be participating in amino acid hydroxylation. As no thioesterase domains were detected in frbI or frbB, the thioesterases frbD and frbE may instead release and cyclize the products of the NRPS and PKS, respectively. In Dothideomycetidae sp. (strain 11243) (Fungal sp. (strain No.11243)), this protein is FR901469 synthetase.